The following is a 545-amino-acid chain: CTP synthase (545 aa).

The tract at residues 1 to 266 (MTTNYIFVTG…DDYICKRFGL (266 aa)) is amidoligase domain. Ser14 provides a ligand contact to CTP. Residue Ser14 coordinates UTP. ATP contacts are provided by residues 15-20 (SLGKGI) and Asp72. Positions 72 and 140 each coordinate Mg(2+). Residues 147-149 (DIE), 187-192 (KTKPTQ), and Lys223 contribute to the CTP site. UTP is bound by residues 187 to 192 (KTKPTQ) and Lys223. 239 to 241 (KDV) contacts ATP. The region spanning 291-542 (TIGMVGKYIA…VKAAGEYQKR (252 aa)) is the Glutamine amidotransferase type-1 domain. Gly352 contacts L-glutamine. Cys379 (nucleophile; for glutamine hydrolysis) is an active-site residue. L-glutamine contacts are provided by residues 380–383 (LGMQ), Glu403, and Arg470. Catalysis depends on residues His515 and Glu517.

This sequence belongs to the CTP synthase family. As to quaternary structure, homotetramer.

The enzyme catalyses UTP + L-glutamine + ATP + H2O = CTP + L-glutamate + ADP + phosphate + 2 H(+). It catalyses the reaction L-glutamine + H2O = L-glutamate + NH4(+). The catalysed reaction is UTP + NH4(+) + ATP = CTP + ADP + phosphate + 2 H(+). Its pathway is pyrimidine metabolism; CTP biosynthesis via de novo pathway; CTP from UDP: step 2/2. With respect to regulation, allosterically activated by GTP, when glutamine is the substrate; GTP has no effect on the reaction when ammonia is the substrate. The allosteric effector GTP functions by stabilizing the protein conformation that binds the tetrahedral intermediate(s) formed during glutamine hydrolysis. Inhibited by the product CTP, via allosteric rather than competitive inhibition. Catalyzes the ATP-dependent amination of UTP to CTP with either L-glutamine or ammonia as the source of nitrogen. Regulates intracellular CTP levels through interactions with the four ribonucleotide triphosphates. This is CTP synthase from Sodalis glossinidius (strain morsitans).